Here is a 415-residue protein sequence, read N- to C-terminus: UDP-N-acetylglucosamine 1-carboxyvinyltransferase (415 aa).

22 to 23 (KN) is a phosphoenolpyruvate binding site. Residue Arg-92 coordinates UDP-N-acetyl-alpha-D-glucosamine. The active-site Proton donor is Cys-116. Position 116 is a 2-(S-cysteinyl)pyruvic acid O-phosphothioketal (Cys-116). UDP-N-acetyl-alpha-D-glucosamine contacts are provided by residues 121 to 125 (RPIDL), Asp-304, and Val-326.

This sequence belongs to the EPSP synthase family. MurA subfamily.

It localises to the cytoplasm. The enzyme catalyses phosphoenolpyruvate + UDP-N-acetyl-alpha-D-glucosamine = UDP-N-acetyl-3-O-(1-carboxyvinyl)-alpha-D-glucosamine + phosphate. Its pathway is cell wall biogenesis; peptidoglycan biosynthesis. Its function is as follows. Cell wall formation. Adds enolpyruvyl to UDP-N-acetylglucosamine. This Halothermothrix orenii (strain H 168 / OCM 544 / DSM 9562) protein is UDP-N-acetylglucosamine 1-carboxyvinyltransferase.